The chain runs to 446 residues: ATP synthase subunit b-delta (446 aa).

Positions 1–168 (MSTFIGQLVG…PKGADVEYPL (168 aa)) are ATP synthase subunit b. The chain crosses the membrane as a helical span at residues 4–24 (FIGQLVGFAAIVYLVWWYVVP). Residues 169 to 446 (LAKMRSASRR…LVAAEAALPD (278 aa)) are ATP synthase subunit delta.

In the N-terminal section; belongs to the ATPase B chain family. This sequence in the C-terminal section; belongs to the ATPase delta chain family. In terms of assembly, F-type ATPases have 2 components, F(1) - the catalytic core - and F(0) - the membrane proton channel. F(1) has five subunits: alpha(3), beta(3), gamma(1), delta(1), epsilon(1). F(0) has three main subunits: a(1), b(2) and c(10-14). The alpha and beta chains form an alternating ring which encloses part of the gamma chain. F(1) is attached to F(0) by a central stalk formed by the gamma and epsilon chains, while a peripheral stalk is formed by the delta and b chains.

The protein resides in the cell membrane. Its function is as follows. F(1)F(0) ATP synthase produces ATP from ADP in the presence of a proton or sodium gradient. F-type ATPases consist of two structural domains, F(1) containing the extramembraneous catalytic core and F(0) containing the membrane proton channel, linked together by a central stalk and a peripheral stalk. During catalysis, ATP synthesis in the catalytic domain of F(1) is coupled via a rotary mechanism of the central stalk subunits to proton translocation. In terms of biological role, this fusion protein includes a component of the F(0) channel (subunit b) and of the F(1) subunit (subunit delta). Two copies of subunit b and one of delta together form the peripheral 'stator' stalk which links F(1) to F(0). This chain is ATP synthase subunit b-delta (atpFH), found in Mycobacterium leprae (strain Br4923).